A 94-amino-acid polypeptide reads, in one-letter code: Small ribosomal subunit protein uS19 (94 aa).

The protein belongs to the universal ribosomal protein uS19 family.

Its function is as follows. Protein S19 forms a complex with S13 that binds strongly to the 16S ribosomal RNA. In Acetivibrio thermocellus (strain ATCC 27405 / DSM 1237 / JCM 9322 / NBRC 103400 / NCIMB 10682 / NRRL B-4536 / VPI 7372) (Clostridium thermocellum), this protein is Small ribosomal subunit protein uS19.